The primary structure comprises 642 residues: Extracellular metalloproteinase 4 (642 aa).

A signal peptide spans M1–A18. A propeptide spanning residues H19–A253 is cleaved from the precursor. A compositionally biased stretch (polar residues) spans S49–F60. The tract at residues S49–G72 is disordered. Residues T61–S71 show a composition bias toward low complexity. N-linked (GlcNAc...) asparagine glycosylation is present at N419. A Zn(2+)-binding site is contributed by H436. Residue E437 is part of the active site. H440 is a binding site for Zn(2+). N-linked (GlcNAc...) asparagine glycans are attached at residues N509 and N602.

Belongs to the peptidase M36 family. Zn(2+) is required as a cofactor.

Its subcellular location is the secreted. In terms of biological role, secreted metalloproteinase that allows assimilation of proteinaceous substrates and probably acts as a virulence factor. This chain is Extracellular metalloproteinase 4 (MEP4), found in Arthroderma gypseum (strain ATCC MYA-4604 / CBS 118893) (Microsporum gypseum).